Consider the following 61-residue polypeptide: Small ribosomal subunit protein uS14B (61 aa).

Positions 24, 27, 40, and 43 each coordinate Zn(2+).

Belongs to the universal ribosomal protein uS14 family. Zinc-binding uS14 subfamily. In terms of assembly, part of the 30S ribosomal subunit. Contacts proteins S3 and S10. Requires Zn(2+) as cofactor.

In terms of biological role, binds 16S rRNA, required for the assembly of 30S particles and may also be responsible for determining the conformation of the 16S rRNA at the A site. The polypeptide is Small ribosomal subunit protein uS14B (Mycolicibacterium gilvum (strain PYR-GCK) (Mycobacterium gilvum (strain PYR-GCK))).